Consider the following 750-residue polypeptide: Nibrin (750 aa).

Residues 24–83 (YIVGRKNCAILIENDQSISRNHAVLRVNFPVTSLSQTDEIPTLTIKDNSKYGTFINEEKM) form the FHA domain. 2 BRCT domains span residues 105 to 181 (KFRV…SEFL) and 224 to 315 (GKTF…LAVI). The segment at 111–328 (EPLVVCSSCL…TESYCNPQGQ (218 aa)) is mediates interaction with SP100. The tract at residues 221–403 (IFKGKTFVFL…SRKLLQGTCN (183 aa)) is interaction with MTOR, MAPKAP1 and RICTOR. Thr-337 carries the post-translational modification Phosphothreonine. Ser-343 bears the Phosphoserine; by ATM mark. Phosphoserine occurs at positions 347 and 433. 2 disordered regions span residues 429-479 (NYQL…SSCK) and 494-550 (QPAG…RKRK). Lys-436 is covalently cross-linked (Glycyl lysine isopeptide (Lys-Gly) (interchain with G-Cter in ubiquitin)). A compositionally biased stretch (polar residues) spans 446-457 (WSSQQQLNSIKN). The Nuclear localization signal motif lies at 461–467 (PCSRKRE). The segment covering 502–514 (KSKDHESQSETLD) has biased composition (basic and acidic residues). A phosphoserine mark is found at Ser-508 and Ser-517. Lys-528 participates in a covalent cross-link: Glycyl lysine isopeptide (Lys-Gly) (interchain with G-Cter in SUMO2). Residues 540-550 (STEDLRARKRK) are compositionally biased toward basic and acidic residues. Glycyl lysine isopeptide (Lys-Gly) (interchain with G-Cter in SUMO2) cross-links involve residues Lys-569 and Lys-580. The segment covering 581-599 (QEADVSIRKKPRMDAERNQ) has biased composition (basic and acidic residues). Residues 581-622 (QEADVSIRKKPRMDAERNQHLNGGPVPESNSALQEDETGKKD) form a disordered region. Residues Lys-683, Lys-687, and Lys-732 each participate in a glycyl lysine isopeptide (Lys-Gly) (interchain with G-Cter in ubiquitin) cross-link. The short motif at 737-746 (ADDLFRYNPN) is the FxF/Y motif element.

This sequence belongs to the Nibrin family. Component of the MRN complex composed of two heterodimers RAD50 and MRE11 associated with a single NBN. The MRN complexes dimerize on DNA to form joined MRN-MRN oligomers required for DNA double-strand break repair. The MRN complexes dimerize on DNA to form joined MRN-MRN oligomers required for DNA double-strand break repair. As part of the MRN complex, interacts with MCM9; the interaction recruits the complex to DNA repair sites. Component of the BASC complex, at least composed of BRCA1, MSH2, MSH6, MLH1, ATM, BLM, RAD50, MRE11 and NBN. Interacts with histone H2AX; this requires phosphorylation of H2AX on 'Ser-139' and promotes NBN recruitment to DNA damage sites. Interacts with (phosphorylated) MDC1; promoting NBN recruitment to DNA damage sites. Interacts with (phosphorylated) RAD17; promoting NBN recruitment to DNA damage sites. Interacts (via FxF/Y motif) with ATM. Interacts with HJURP. Interacts with INTS3. Interacts with KPNA2. Interacts with TERF2; interaction is disrupted upon NBN phosphorylation by CDK2. Interacts with (phosphorylated) RBBP8/CtIP; the interaction links the role of the MRN complex in DNA double-strand break sensing to resection. Interacts with SP100; recruits NBN to PML bodies. Interacts with ATF2. Interacts with MTOR, MAPKAP1 isoform 2 and RICTOR; indicative for an association with the mTORC2 complex. Interacts with MRNIP. Interacts with UFL1; promoting UFL1 recruitment to double-strand breaks following DNA damage. Interacts with CYREN (via XLF motif). Post-translationally, phosphorylated by ATM in response of ionizing radiation, and such phosphorylation is responsible intra-S phase checkpoint control and telomere maintenance. Phosphorylated at Ser-433 by CDK2 in S/G2 phases abolishes interaction with TERF2, enabling DCLRE1B/Apollo recruitment to telomeres. Phosphorylation at Ser-433 in response to dysfunctional telomeres promotes non-homologous end joining repair at telomeres, while dephosphorylation by PPP1CA promotes microhomology-mediated end-joining (MMEJ) repair. In terms of processing, ubiquitinated at Lys-436 via 'Lys-6'-linked ubiquitin chains by RNF8, promoting NBN recruitment to DNA double-strand breaks (DSBs). Ubiquitinated at Lys-687 via 'Lys-63'-linked ubiquitin chains by PELI1: ubiquitination takes place following PELI1 phosphorylation and promotes ATM activation and DNA repair. Ubiquitinated at Lys-732 via 'Lys-63'-linked ubiquitin chains by the SCF(SKP2) complex: ubiquitination takes place following SKP2 phosphorylation and promotes ATM activation and DNA repair. As to expression, present at approximately equal levels in the heart at fetal day 17, at relatively constant levels at postnatal days 10, 17 and 21 and at slightly lower levels in the adult heart. Barely detectable in the brain. Not detected in kidney, very low levels in liver and skeletal muscle and moderate levels in heart, lung and brain (at protein level).

Its subcellular location is the nucleus. It localises to the chromosome. The protein resides in the PML body. It is found in the telomere. Its function is as follows. Component of the MRN complex, which plays a central role in double-strand break (DSB) repair, DNA recombination, maintenance of telomere integrity and meiosis. The MRN complex is involved in the repair of DNA double-strand breaks (DSBs) via homologous recombination (HR), an error-free mechanism which primarily occurs during S and G2 phases. The complex (1) mediates the end resection of damaged DNA, which generates proper single-stranded DNA, a key initial steps in HR, and is (2) required for the recruitment of other repair factors and efficient activation of ATM and ATR upon DNA damage. The MRN complex possesses single-strand endonuclease activity and double-strand-specific 3'-5' exonuclease activity, which are provided by MRE11, to initiate end resection, which is required for single-strand invasion and recombination. Within the MRN complex, NBN acts as a protein-protein adapter, which specifically recognizes and binds phosphorylated proteins, promoting their recruitment to DNA damage sites. Recruits MRE11 and RAD50 components of the MRN complex to DSBs in response to DNA damage. Promotes the recruitment of PI3/PI4-kinase family members ATM, ATR, and probably DNA-PKcs to the DNA damage sites, activating their functions. Mediates the recruitment of phosphorylated RBBP8/CtIP to DSBs, leading to cooperation between the MRN complex and RBBP8/CtIP to initiate end resection. RBBP8/CtIP specifically promotes the endonuclease activity of the MRN complex to clear DNA ends containing protein adducts. The MRN complex is also required for the processing of R-loops. NBN also functions in telomere length maintenance via its interaction with TERF2: interaction with TERF2 during G1 phase preventing recruitment of DCLRE1B/Apollo to telomeres. NBN also promotes DNA repair choice at dysfunctional telomeres: NBN phosphorylation by CK2 promotes non-homologous end joining repair at telomeres, while unphosphorylated NBN promotes microhomology-mediated end-joining (MMEJ) repair. Enhances AKT1 phosphorylation possibly by association with the mTORC2 complex. The chain is Nibrin (Nbn) from Rattus norvegicus (Rat).